The following is a 353-amino-acid chain: Photosystem II protein D1 (353 aa).

The residue at position 2 (Thr2) is an N-acetylthreonine. At Thr2 the chain carries Phosphothreonine. Helical transmembrane passes span 29 to 46 (YIGW…TATS), 118 to 133 (HFLL…EWEL), and 142 to 156 (WIAV…AATA). His118 contributes to the chlorophyll a binding site. Tyr126 contributes to the pheophytin a binding site. Asp170 and Glu189 together coordinate [CaMn4O5] cluster. Residues 197–218 (FHMLGVAGVFGGSLFSAMHGSL) form a helical membrane-spanning segment. His198 contacts chlorophyll a. A quinone-binding positions include His215 and 264 to 265 (SF). A Fe cation-binding site is contributed by His215. Residue His272 coordinates Fe cation. A helical transmembrane segment spans residues 274–288 (FLAAWPVVGIWFTAL). Residues His332, Glu333, Asp342, and Ala344 each contribute to the [CaMn4O5] cluster site. Positions 345–353 (AVEVPSING) are excised as a propeptide.

It belongs to the reaction center PufL/M/PsbA/D family. As to quaternary structure, PSII is composed of 1 copy each of membrane proteins PsbA, PsbB, PsbC, PsbD, PsbE, PsbF, PsbH, PsbI, PsbJ, PsbK, PsbL, PsbM, PsbT, PsbX, PsbY, PsbZ, Psb30/Ycf12, at least 3 peripheral proteins of the oxygen-evolving complex and a large number of cofactors. It forms dimeric complexes. Requires The D1/D2 heterodimer binds P680, chlorophylls that are the primary electron donor of PSII, and subsequent electron acceptors. It shares a non-heme iron and each subunit binds pheophytin, quinone, additional chlorophylls, carotenoids and lipids. D1 provides most of the ligands for the Mn4-Ca-O5 cluster of the oxygen-evolving complex (OEC). There is also a Cl(-1) ion associated with D1 and D2, which is required for oxygen evolution. The PSII complex binds additional chlorophylls, carotenoids and specific lipids. as cofactor. Tyr-161 forms a radical intermediate that is referred to as redox-active TyrZ, YZ or Y-Z. Post-translationally, C-terminally processed by CTPA; processing is essential to allow assembly of the oxygen-evolving complex and thus photosynthetic growth.

The protein localises to the plastid. It is found in the chloroplast thylakoid membrane. It carries out the reaction 2 a plastoquinone + 4 hnu + 2 H2O = 2 a plastoquinol + O2. Functionally, photosystem II (PSII) is a light-driven water:plastoquinone oxidoreductase that uses light energy to abstract electrons from H(2)O, generating O(2) and a proton gradient subsequently used for ATP formation. It consists of a core antenna complex that captures photons, and an electron transfer chain that converts photonic excitation into a charge separation. The D1/D2 (PsbA/PsbD) reaction center heterodimer binds P680, the primary electron donor of PSII as well as several subsequent electron acceptors. The protein is Photosystem II protein D1 of Cucumis sativus (Cucumber).